Here is a 636-residue protein sequence, read N- to C-terminus: MVSEMLEEIKRTIMQRLPERVQVAKVEFEGPEVVIYTKNPEIITENGNLIRDIAKDIRKRIIIRSDRSVLMDPEKAIRKIHEIVPEEAKITNISFDDVTCEVIIEARKPGLVIGKYGSTSREIVKNTGWAPKILRTPPISSEIIERIRRTLRKNSKERKKILQQLGNRIHQKPKYDNDWARLTAMGGFREVGRSCLYLQTPNSRVLLDCGVNVAGGDDKNSYPYLNVPEFTLDSLDAVIITHAHLDHSGFLPYLYHYGYDGPVYCTAPTRDLMTLLQLDHIDIAHREDEPLPFNVKHVKKSVKHTITLDYGEVTDIAPDIRLTLHNAGHILGSAMAHLHIGDGQHNMVYTGDFKYEQSRLLEAAANRFPRIETLVMESTYGGHEDVQPSRNRAEKELVKTIYSTLRRGGKILIPVFAVGRAQELMIVLEEYIRTGIIDEVPVYIDGMIWEANAIHTARPEYLSKDLRDQIFHMGHNPFISDIFHKVNGMDERREIVEGEPSIILSTSGMLTGGNSLEYFKWLCEDPDNSLVFVGYQAEGSLGRRIQKGWKEIPLKDEDDKMRVYNVRMNIKTIEGFSGHSDRRQLMEYVKRISPKPEKILLCHGDNYKTLDLASSIYRTYRIETKTPLNLETVRIQ.

Residues 3–70 (SEMLEEIKRT…IIIRSDRSVL (68 aa)) form a KHa region. Residues 71–138 (MDPEKAIRKI…WAPKILRTPP (68 aa)) form a KHb region. A metallo-beta-lactamase N-terminus region spans residues 179–383 (WARLTAMGGF…LVMESTYGGH (205 aa)). Zn(2+) is bound by residues histidine 242, histidine 244, aspartate 246, histidine 247, histidine 329, and aspartate 352. The tract at residues 384–577 (EDVQPSRNRA…MNIKTIEGFS (194 aa)) is beta-Casp. Positions 578–636 (GHSDRRQLMEYVKRISPKPEKILLCHGDNYKTLDLASSIYRTYRIETKTPLNLETVRIQ) are metallo-beta-lactamase C-terminus. Histidine 603 lines the Zn(2+) pocket.

Belongs to the metallo-beta-lactamase superfamily. RNA-metabolizing metallo-beta-lactamase-like family. FttA subfamily. In terms of assembly, homodimer. Interacts with RNA polymerase (RNAP), interacts with the Spt4-Spt5 complex. Does not seem to interact with the RNA degrading exosome. It depends on Zn(2+) as a cofactor.

Its activity is regulated as follows. Most active at 0.5 M or 0.7 M NaCl, less active at 1.0 M NaCl. Nuclease activity is inhibited by N,N,Tetrakis-(2-pyridylmethyl)-ethylene diamine (TPEN), a specific chelator of zinc ions. In terms of biological role, terminates transcription on the whole genome. Termination is linked to FttA-mediated RNA cleavage and does not require NTP hydrolysis. Cleaves endonucleolytically at the RNA exit channel of RNA polymerase (RNAP); the 5'-3' exonuclease activity of this protein degrades the nascent RNA released from RNAP. An RNA nuclease, it bind single-stranded RNA (ssRNA) with a preference for U-rich sequences. This is Transcription termination factor FttA from Methanothermobacter thermautotrophicus (strain ATCC 29096 / DSM 1053 / JCM 10044 / NBRC 100330 / Delta H) (Methanobacterium thermoautotrophicum).